The following is a 381-amino-acid chain: Meiotic recombination protein SPO11-1 (381 aa).

The 140-residue stretch at 23 to 162 folds into the Topo IIA-type catalytic domain; it reads EEAATLLHRI…LNVVPVAKGL (140 aa). Tyrosine 123 functions as the O-(5'-phospho-DNA)-tyrosine intermediate in the catalytic mechanism. Positions 209 and 261 each coordinate Mg(2+).

Belongs to the TOP6A family. Mg(2+) is required as a cofactor. As to expression, highly expressed in flowers before pollination. Expressed in roots and shoots.

It is found in the nucleus. It carries out the reaction ATP-dependent breakage, passage and rejoining of double-stranded DNA.. Required for meiotic recombination. Mediates DNA cleavage that forms the double-strand breaks (DSB) that initiate meiotic recombination. May be involved in plant growth and development, and stress tolerance. This Oryza sativa subsp. indica (Rice) protein is Meiotic recombination protein SPO11-1 (SPO11-1).